The chain runs to 364 residues: Aminomethyltransferase (364 aa).

Belongs to the GcvT family. In terms of assembly, the glycine cleavage system is composed of four proteins: P, T, L and H.

The enzyme catalyses N(6)-[(R)-S(8)-aminomethyldihydrolipoyl]-L-lysyl-[protein] + (6S)-5,6,7,8-tetrahydrofolate = N(6)-[(R)-dihydrolipoyl]-L-lysyl-[protein] + (6R)-5,10-methylene-5,6,7,8-tetrahydrofolate + NH4(+). The glycine cleavage system catalyzes the degradation of glycine. This Staphylococcus carnosus (strain TM300) protein is Aminomethyltransferase.